Reading from the N-terminus, the 442-residue chain is Glutamyl-tRNA reductase (442 aa).

Residues threonine 49–arginine 52, serine 109, glutamate 114–glutamine 116, and glutamine 120 contribute to the substrate site. The Nucleophile role is filled by cysteine 50. An NADP(+)-binding site is contributed by glycine 198–alanine 203. The segment at methionine 420–lysine 442 is disordered. Over residues aspartate 433–lysine 442 the composition is skewed to basic and acidic residues.

This sequence belongs to the glutamyl-tRNA reductase family. In terms of assembly, homodimer.

It carries out the reaction (S)-4-amino-5-oxopentanoate + tRNA(Glu) + NADP(+) = L-glutamyl-tRNA(Glu) + NADPH + H(+). Its pathway is porphyrin-containing compound metabolism; protoporphyrin-IX biosynthesis; 5-aminolevulinate from L-glutamyl-tRNA(Glu): step 1/2. It participates in porphyrin-containing compound metabolism; chlorophyll biosynthesis. In terms of biological role, catalyzes the NADPH-dependent reduction of glutamyl-tRNA(Glu) to glutamate 1-semialdehyde (GSA). In Synechococcus sp. (strain RCC307), this protein is Glutamyl-tRNA reductase.